The sequence spans 185 residues: ATP synthase subunit delta (185 aa).

The protein belongs to the ATPase delta chain family. As to quaternary structure, F-type ATPases have 2 components, F(1) - the catalytic core - and F(0) - the membrane proton channel. F(1) has five subunits: alpha(3), beta(3), gamma(1), delta(1), epsilon(1). CF(0) has four main subunits: a(1), b(1), b'(1) and c(10-14). The alpha and beta chains form an alternating ring which encloses part of the gamma chain. F(1) is attached to F(0) by a central stalk formed by the gamma and epsilon chains, while a peripheral stalk is formed by the delta, b and b' chains.

It is found in the cellular thylakoid membrane. In terms of biological role, f(1)F(0) ATP synthase produces ATP from ADP in the presence of a proton or sodium gradient. F-type ATPases consist of two structural domains, F(1) containing the extramembraneous catalytic core and F(0) containing the membrane proton channel, linked together by a central stalk and a peripheral stalk. During catalysis, ATP synthesis in the catalytic domain of F(1) is coupled via a rotary mechanism of the central stalk subunits to proton translocation. This protein is part of the stalk that links CF(0) to CF(1). It either transmits conformational changes from CF(0) to CF(1) or is implicated in proton conduction. This is ATP synthase subunit delta from Acaryochloris marina (strain MBIC 11017).